Here is a 226-residue protein sequence, read N- to C-terminus: Octanoyltransferase (226 aa).

The BPL/LPL catalytic domain occupies 37–220; that stretch reads GTAGELIWLL…SFSKVFGPVE (184 aa). Residues 76 to 83, 151 to 153, and 164 to 166 contribute to the substrate site; these read RGGQFTYH, AIG, and GIS. Cysteine 182 serves as the catalytic Acyl-thioester intermediate.

This sequence belongs to the LipB family.

The protein localises to the cytoplasm. The enzyme catalyses octanoyl-[ACP] + L-lysyl-[protein] = N(6)-octanoyl-L-lysyl-[protein] + holo-[ACP] + H(+). It participates in protein modification; protein lipoylation via endogenous pathway; protein N(6)-(lipoyl)lysine from octanoyl-[acyl-carrier-protein]: step 1/2. In terms of biological role, catalyzes the transfer of endogenously produced octanoic acid from octanoyl-acyl-carrier-protein onto the lipoyl domains of lipoate-dependent enzymes. Lipoyl-ACP can also act as a substrate although octanoyl-ACP is likely to be the physiological substrate. The polypeptide is Octanoyltransferase (Caulobacter vibrioides (strain ATCC 19089 / CIP 103742 / CB 15) (Caulobacter crescentus)).